The sequence spans 152 residues: MSTKKIMLKSSEGKTFEIEEETARQCQTIAHMIEAECTDNVILVLKMTSEILEMVIEYCNKHHVDAANPCSDDDLEKWDKEFMEKDKSTIFALTNAANFLNNKSLLHLAGQTVADMIKGNTPKQMREFFNIENDLTPEEEAAIRRENKWAFE.

The segment at T94 to E152 is interaction with the F-box domain of F-box proteins.

Belongs to the SKP1 family. As to quaternary structure, part of a SCF (SKP1-cullin-F-box) protein ligase complex. As to expression, restricted to siliques.

It is found in the nucleus. The protein operates within protein modification; protein ubiquitination. Functionally, involved in ubiquitination and subsequent proteasomal degradation of target proteins. Together with CUL1, RBX1 and a F-box protein, it forms a SCF E3 ubiquitin ligase complex. The functional specificity of this complex depends on the type of F-box protein. In the SCF complex, it serves as an adapter that links the F-box protein to CUL1. This chain is SKP1-like protein 8 (ASK8), found in Arabidopsis thaliana (Mouse-ear cress).